A 294-amino-acid chain; its full sequence is N-acetylmuramic acid 6-phosphate etherase (294 aa).

The SIS domain maps to 56 to 219 (TSQALKKGGR…STLSMVSVGK (164 aa)). The Proton donor role is filled by Glu84. Residue Glu115 is part of the active site.

It belongs to the GCKR-like family. MurNAc-6-P etherase subfamily. As to quaternary structure, homodimer.

It carries out the reaction N-acetyl-D-muramate 6-phosphate + H2O = N-acetyl-D-glucosamine 6-phosphate + (R)-lactate. It functions in the pathway amino-sugar metabolism; 1,6-anhydro-N-acetylmuramate degradation. It participates in amino-sugar metabolism; N-acetylmuramate degradation. Its pathway is cell wall biogenesis; peptidoglycan recycling. Its function is as follows. Specifically catalyzes the cleavage of the D-lactyl ether substituent of MurNAc 6-phosphate, producing GlcNAc 6-phosphate and D-lactate. Together with AnmK, is also required for the utilization of anhydro-N-acetylmuramic acid (anhMurNAc) either imported from the medium or derived from its own cell wall murein, and thus plays a role in cell wall recycling. This is N-acetylmuramic acid 6-phosphate etherase from Francisella philomiragia subsp. philomiragia (strain ATCC 25017 / CCUG 19701 / FSC 153 / O#319-036).